Consider the following 412-residue polypeptide: MTDREEVVELRGHIIDSLIFSRVLDTIMEMGGDFEILEFKVGKRKTDPSFAKILVKGKDPEHLREIVSELRKYGAVPVHTQEVRLEPAPADGVCPRGFYTTTNHRTFVLFDGEWIEVEDIEMDCAIVVYPEERRAVAKPIREVREGELVVVGDRGVRVKPPERPRGRTGIFGFMESEVSPEKPTPTLIRRIAEELEWHRKNGKIVVVVGPAVIHAGARDDLAWMIREGYVDVLFAGNAVATHDVEASLFGTSLGVDLETGEPVKGGHSHHLYAINEIRRVGGLREAVEKGILKDGIMYECIVNDVPYVLAGSIRDDGPIPDVITDVMEAQAEMRRHLKGATLVLMMATMLHSIATGNLLPSWVKTICVDINPAVVTKLMDRGTAQALGIVSDVGVFLPELVKELKRVRDDEA.

Residues N237, A238, D316, T348, M349, L350, H351, D369, D392, and V393 each coordinate NAD(+).

The protein belongs to the AgrE/ArgZ ornithine cyclodeaminase family. The cofactor is NAD(+).

The enzyme catalyses L-ornithine = L-proline + NH4(+). Functionally, catalyzes the conversion of ornithine to proline, with the release of ammonia. The protein is Ornithine cyclodeaminase of Methanopyrus kandleri (strain AV19 / DSM 6324 / JCM 9639 / NBRC 100938).